A 372-amino-acid polypeptide reads, in one-letter code: Ciliary neurotrophic factor receptor subunit alpha (372 aa).

Residues 1-22 (MAASVPWACCAVLAAAAAAVYT) form the signal peptide. One can recognise an Ig-like C2-type domain in the interval 27–104 (PQEAPHVQYE…WHLRHQVLLH (78 aa)). A disulfide bridge links Cys46 with Cys89. N-linked (GlcNAc...) asparagine glycosylation is found at Asn60, Asn70, Asn142, and Asn190. 2 consecutive Fibronectin type-III domains span residues 108-205 (PPRE…VKPD) and 206-306 (PPEN…TEEP). Residues 290–294 (WSDWS) carry the WSXWS motif motif. Residues 301-338 (PWTEEPRHLTTEAQAPETTTSTTSSLAPPPTTKICDPG) form a disordered region. The segment covering 311 to 326 (TEAQAPETTTSTTSSL) has biased composition (low complexity). Ser342 is lipidated: GPI-anchor amidated serine. The propeptide at 343–372 (GGGPSILFLTSVPVTLVLAAAAATANNLLI) is removed in mature form.

This sequence belongs to the type I cytokine receptor family. Type 3 subfamily. Forms a heterotrimer with LIFR and IL6ST. Interacts with heterodimeric neurotropic cytokine composed of CLCF1/CLC and CRLF1/CLF-1. Either alone or in complex with the heterodimer CLCF1-CRLF1 interacts with SORL1; this interaction may promote internalization and lysosomal degradation.

Its subcellular location is the cell membrane. In terms of biological role, binds to CNTF. The alpha subunit provides the receptor specificity. The protein is Ciliary neurotrophic factor receptor subunit alpha (Cntfr) of Mus musculus (Mouse).